A 348-amino-acid polypeptide reads, in one-letter code: uncharacterized protein (348 aa).

This is an uncharacterized protein from Caenorhabditis elegans.